Reading from the N-terminus, the 308-residue chain is Phosphoribosylaminoimidazole-succinocarboxamide synthase (308 aa).

Belongs to the SAICAR synthetase family.

The enzyme catalyses 5-amino-1-(5-phospho-D-ribosyl)imidazole-4-carboxylate + L-aspartate + ATP = (2S)-2-[5-amino-1-(5-phospho-beta-D-ribosyl)imidazole-4-carboxamido]succinate + ADP + phosphate + 2 H(+). It participates in purine metabolism; IMP biosynthesis via de novo pathway; 5-amino-1-(5-phospho-D-ribosyl)imidazole-4-carboxamide from 5-amino-1-(5-phospho-D-ribosyl)imidazole-4-carboxylate: step 1/2. The chain is Phosphoribosylaminoimidazole-succinocarboxamide synthase from Xanthomonas euvesicatoria pv. vesicatoria (strain 85-10) (Xanthomonas campestris pv. vesicatoria).